The following is a 132-amino-acid chain: CLAVATA3/ESR (CLE)-related protein TDIF (132 aa).

An N-terminal signal peptide occupies residues 1 to 26; it reads MDIDLLWSFGGWFFILFPETINYCMA. A helical transmembrane segment spans residues 42–62; it reads SCSSLFFVALLIITILITMLQ. Positions 68–77 are enriched in polar residues; that stretch reads EVTSLPTHQP. The disordered stretch occupies residues 68 to 132; the sequence is EVTSLPTHQP…PSGPNPISNR (65 aa). Over residues 87 to 96 the composition is skewed to low complexity; that stretch reads STSSTATTTT. Basic residues predominate over residues 101–111; that stretch reads KRTHHQSHPKP. Hydroxyproline occurs at positions 123 and 126. P126 carries O-linked (Ara...) hydroxyproline glycosylation.

It belongs to the CLV3/ESR signal peptide family. In terms of assembly, interacts specifically with the leucine-rich repeat receptor-like protein kinase TDR. In terms of processing, the TDIFp peptide contains two hydroxprolines, but hydroxylation had no direct effect on TDIFp activity. The O-glycosylation (arabinosylation) of the hydroxyproline Pro-126 enhances binding affinity of the TDIFp peptide for its receptor.

The protein localises to the secreted. Its subcellular location is the extracellular space. It is found in the cell membrane. Its function is as follows. Extracellular signal peptide that regulates cell fate. Represses tracheary element differentiation but promotes the formation of procambial cells adjacent to phloem cells in the veins. This Zinnia elegans (Garden zinnia) protein is CLAVATA3/ESR (CLE)-related protein TDIF.